Reading from the N-terminus, the 2319-residue chain is MLTMSVTLSPLRSQDLDPMATDASPMAINMTPTVEQGEGEEAMKDMDSDQQYEKPPPLHTGADWKIVLHLPEIETWLRMTSERVRDLTYSVQQDSDSKHVDVHLVQLKDICEDISDHVEQIHALLETEFSLKLLSYSVNVIVDIHAVQLLWHQLRVSVLVLRERILQGLQDANGNYTRQTDILQAFSEETKEGRLDSLTEVDDSGQLTIKCSQNYLSLDCGITAFELSDYSPSEDLLSGLGDMTSSQVKTKPFDSWSYSEMEKEFPELIRSVGLLTVAADSISTNGSEAVTEEVSQVSLSVDDKGGCEEDNASAVEEQPGLTLGVSSSSGEALTNAAQPSSETVQQESSSSSHHDAKNQQPVPCENATPKRTIRDCFNYNEDSPTQPTLPKRGLFLKEETFKNDLKGNGGKRQMVDLKPEMSRSTPSLVDPPDRSKLCLVLQSSYPNSPSAASQSYECLHKVGNGNLENTVKFHIKEISSSLGRLNDCYKEKSRLKKPHKTSEEVPPCRTPKRGTGSGKQAKNTKSSAVPNGELSYTSKAIEGPQTNSASTSSLEPCNQRSWNAKLQLQSETSSSPAFTQSSESSVGSDNIMSPVPLLSKHKSKKGQASSPSHVTRNGEVVEAWYGSDEYLALPSHLKQTEVLALKLENLTKLLPQKPRGETIQNIDDWELSEMNSDSEIYPTYHVKKKHTRLGRVSPSSSSDIASSLGESIESGPLSDILSDEESSMPLAGMKKYADEKSERASSSEKNESHSATKSALIQKLMQDIQHQDNYEAIWEKIEGFVNKLDEFIQWLNEAMETTENWTPPKAEMDDLKLYLETHLSFKLNVDSHCALKEAVEEEGHQLLELIASHKAGLKDMLRMIASQWKELQRQIKRQHSWILRALDTIKAEILATDVSVEDEEGTGSPKAEVQLCYLEAQRDAVEQMSLKLYSEQYTSSSKRKEEFADMSKVHSVGSNGLLDFDSEYQELWDWLIDMESLVMDSHDLMMSEEQQQHLYKRYSVEMSIRHLKKTELLSKVEALKKGGVLLPNDLLEKVDSINEKWELLGKTLGEKIQDTMAGHSGSSPRDLLSPESGSLVRQLEVRIKELKGWLRDTELFIFNSCLRQEKEGTMNTEKQLQYFKSLCREIKQRRRGVASILRLCQHLLDDRETCNLNADHQPMQLIIVNLERRWEAIVMQAVQWQTRLQKKMGKESETLNVIDPGLMDLNGMSEDALEWDEMDISNKLISLNEESNDLDQELQPVIPSLKLGETSNEDPGYDEEADNHGGSQYASNITAPSSPHIYQVYSLHNVELYEDNHMPFLKNNPKVTGMTQPNVLTKSLSKDSSFSSTKSLPDLLGGSNLVKPCACHGGDMSQNSGSESGIVSEGDTETTTNSEMCLLNAVDGSPSNLETEHLDPQMGDAVNVLKQKFTDEGESIKLPNSSQSSISPVGCVNGKVGDLNSITKHTPDCLGEELQGKHDVFTFYDYSYLQGSKLKLPMIMKQSQSEKAHVEDPLLRGFYFDKKSCKSKHQTTELQPDVPPHERILASASHEMDRISYKSGNIEKTFTGMQNAKQLSLLSHSSSIESLSPGGDLFGLGIFKNGSDSLQRSTSLESWLTSYKSNEDLFSCHSSGDISVSSGSVGELSKRTLDLLNRLENIQSPSEQKIKRSVSDITLQSSSQKMSFTGQMSLDIASSINEDSAASLTELSSSDELSLCSEDIVLHKNKIPESNASFRKRLTRSVADESDVNVSMIVNVSCTSACTDDEDDSDLLSSSTLTLTEEELCIKDEDDDSSIATDDEIYEDCTLMSGLDYIKNELQTWIRPKLSLTRDKKRCNVSDEMKGSKDISSSEMTNPSDTLNIETLLNGSVKRVSENNGNGKNSSHTHELGTKRENKKTIFKVNKDPYVADMENGNIEGIPERQKGKPNVTSKVSENLGSHGKEISESEHCKCKALMDSLDDSNTAGKEFVSQDVRHLPKKCPNHHHFENQSTASTPTEKSFSELALETRFNNRQDSDALKSSDDAPSMAGKSAGCCLALEQNGTEENASISNISCCNCEPDVFHQKDAEDCSVHNFVKEIIDMASTALKSKSQPENEVAAPTSLTQIKEKVLEHSHRPIQLRKGDFYSYLSLSSHDSDCGEVTNYIEEKSSTPLPLDTTDSGLDDKEDIECFFEACVEGDSDGEEPCFSSAPPNESAVPSEAAMPLQATACSSEFSDSSLSADDADTVALSSPSSQERAEVGKEVNGLPQTSSGCAENLEFTPSKLDSEKESSGKPGESGMPEEHNAASAKSKVQDLSLKANQPTDKAALHPSPKTLTCEENLLNLHEKRHRNMHR.

Composition is skewed to polar residues over residues 1–12 (MLTMSVTLSPLR) and 324–339 (GVSSSSGEALTNAAQP). 5 disordered regions span residues 1–24 (MLTMSVTLSPLRSQDLDPMATDAS), 301–369 (VDDK…NATP), 493–532 (SRLKKPHKTSEEVPPCRTPKRGTGSGKQAKNTKSSAVPNG), 566–614 (LQLQ…PSHV), and 691–757 (TRLG…SATK). Low complexity predominate over residues 340 to 351 (SSETVQQESSSS). Polar residues-rich tracts occupy residues 518–532 (GKQAKNTKSSAVPNG) and 566–591 (LQLQSETSSSPAFTQSSESSVGSDNI). Residues 697–711 (SPSSSSDIASSLGES) show a composition bias toward low complexity. A compositionally biased stretch (basic and acidic residues) spans 735–754 (KYADEKSERASSSEKNESHS). 2 Spectrin repeats span residues 762 to 848 (QKLM…QLLE) and 1036 to 1150 (EKVD…LLDD). S1073 carries the post-translational modification Phosphoserine. Residues 1250 to 1272 (KLGETSNEDPGYDEEADNHGGSQ) are disordered. The span at 1255 to 1265 (SNEDPGYDEEA) shows a compositional bias: acidic residues. Phosphoserine occurs at positions 1570 and 1595. 3 disordered regions span residues 1821–1842 (VSDEMKGSKDISSSEMTNPSDT), 1900–1925 (EGIPERQKGKPNVTSKVSENLGSHGK), and 1963–1983 (KCPNHHHFENQSTASTPTEKS). 3 stretches are compositionally biased toward polar residues: residues 1830–1842 (DISSSEMTNPSDT), 1911–1920 (NVTSKVSENL), and 1972–1982 (NQSTASTPTEK). Residues 2063 to 2076 (IIDMASTALKSKSQ) are PKA-RII subunit binding domain. Residues 2198–2215 (FSDSSLSADDADTVALSS) show a composition bias toward low complexity. The interval 2198 to 2319 (FSDSSLSADD…HEKRHRNMHR (122 aa)) is disordered.

As to quaternary structure, interacts with RII subunit of PKA, phosphatase 2B (calcineurin) and AKAP79. Interacts with SYNPO2. As to expression, highly expressed in cardiac and skeletal muscle, followed by brain.

It localises to the sarcoplasmic reticulum. It is found in the nucleus membrane. Its function is as follows. Binds to type II regulatory subunits of protein kinase A and anchors/targets them to the nuclear membrane or sarcoplasmic reticulum. May act as an adapter for assembling multiprotein complexes. In Homo sapiens (Human), this protein is A-kinase anchor protein 6 (AKAP6).